A 213-amino-acid chain; its full sequence is MVPEEEPQDREKGLWWFQLKVWSMAVVSILLLSVCFTVSSVVPHNFMYSKTVKRLSKLREYQQYHPSLTCVMEGKDIEDWSCCPTPWTSFQSSCYFISTGMQSWTKSQKNCSVMGADLVVINTREEQDFIIQNLKRNSSYFLGLSDPGGRRHWQWVDQTPYNENVTFWHSGEPNNLDERCAIINFRSSEEWGWNDIHCHVPQKSICKMKKIYI.

Over 1 to 21 the chain is Cytoplasmic; the sequence is MVPEEEPQDREKGLWWFQLKV. The helical; Signal-anchor for type II membrane protein transmembrane segment at 22–44 threads the bilayer; that stretch reads WSMAVVSILLLSVCFTVSSVVPH. Topologically, residues 45–213 are extracellular; sequence NFMYSKTVKR…SICKMKKIYI (169 aa). 2 cysteine pairs are disulfide-bonded: Cys70/Cys82 and Cys83/Cys94. The C-type lectin domain occupies 90–207; the sequence is FQSSCYFIST…CHVPQKSICK (118 aa). Asn110 and Asn137 each carry an N-linked (GlcNAc...) asparagine glycan. 2 disulfide bridges follow: Cys111–Cys206 and Cys180–Cys198. A carbohydrate is bound at residue Ser139. N-linked (GlcNAc...) asparagine glycosylation occurs at Asn164. Ca(2+)-binding residues include Glu172, Asn174, and Glu178. A carbohydrate-binding positions include Glu178, 184 to 186, Asn194, 194 to 195, and Gln202; these read NFR and ND. Ca(2+) is bound by residues Asn194 and Asp195.

In terms of assembly, homodimer. Expressed in plasmacytoid dendritic cells (PDCs). Constitutively expressed in immature monocyte-derived dendritic cells (iMDDC) and is significantly down-regulated upon maturation with LPS but not with TNF-alpha.

Its subcellular location is the cell membrane. Functionally, lectin-type cell surface receptor which may play a role in antigen capturing by dendritic cells. Specifically recognizes non-sialylated galactose-terminated biantennary glycans containing the trisaccharide epitope Gal(beta1-3/4)GlcNAc(beta1-2)Man. Binds to serum IgG. Efficiently targets ligand into antigen-processing and peptide-loading compartments for presentation to T-cells. May mediate potent inhibition of induction of IFN-alpha/beta expression in plasmacytoid dendritic cells. May act as a signaling receptor that activates protein-tyrosine kinases and mobilizes intracellular calcium. This chain is C-type lectin domain family 4 member C (CLEC4C), found in Homo sapiens (Human).